The chain runs to 191 residues: Fe/S biogenesis protein NfuA (191 aa).

Residues C149 and C152 each coordinate [4Fe-4S] cluster.

This sequence belongs to the NfuA family. In terms of assembly, homodimer. [4Fe-4S] cluster is required as a cofactor.

Its function is as follows. Involved in iron-sulfur cluster biogenesis. Binds a 4Fe-4S cluster, can transfer this cluster to apoproteins, and thereby intervenes in the maturation of Fe/S proteins. Could also act as a scaffold/chaperone for damaged Fe/S proteins. The chain is Fe/S biogenesis protein NfuA from Pectobacterium atrosepticum (strain SCRI 1043 / ATCC BAA-672) (Erwinia carotovora subsp. atroseptica).